A 513-amino-acid chain; its full sequence is MAFQVNTNINALNAHAMGLVTQRELKESLERLSSGLRINKAADDASGMTIADSLRSQAKSLGQAIANTNDGMGIIQIADKAMDEQIKILDTIKVKATQAAQDGQNTQSRKALQADIVRLIQSLDNIGNTTSYNGQTLLSGAFSNKEFQVGAYSNETIKASIGSATSDKIGQVKITTGKNITASGEVALTFKQVDGVHDVSLESVKISTSAGTGLGVLAEVINKNSNATGVRATANVITTSDSAIKSGSLSSLTVNGIEIGNILGIKKNDSDGRLVAALNAVTAQTGVEAYTDSVGRLNLRSIDGRGINIKANSTNVDGQASALTTLNGGQDITRGSTNFGRLSLVRQDARDILVVSGANVSASAGYAAIGFAKGTTANTTVNLRDVLGEFNQAVRSASGANYNKTLASENLTLGSGVTTLRGAMVVMDIAESAQKMLDKVRSDLGSVQNQMVSTVNNITITQVNVKAAESQIRDVDFAQESANFSKNNILAQSGSYAMSQANTVQQNILRLLT.

It belongs to the bacterial flagellin family. In terms of assembly, heteromer of FlaA and FlaB. FlaB is located proximal to the hook while the remainder of the filament is composed of the predominant FlaA.

The protein localises to the secreted. Its subcellular location is the bacterial flagellum. In terms of biological role, flagellin is the subunit protein which polymerizes to form the filaments of bacterial flagella. Important for motility and virulence. The polypeptide is Flagellin A (flaA) (Helicobacter felis (strain ATCC 49179 / CCUG 28539 / NCTC 12436 / CS1)).